The sequence spans 496 residues: Cytochrome P450 71D180 (496 aa).

A helical; Signal-anchor for type II membrane protein membrane pass occupies residues M1 to M21. A heme-binding site is contributed by C435.

The protein belongs to the cytochrome P450 family. The cofactor is heme. In terms of tissue distribution, mostly expressed in flowers and, to a lower extent, in leaves, especially in glandular trichomes.

The protein resides in the membrane. It catalyses the reaction (4R)-limonene + reduced [NADPH--hemoprotein reductase] + O2 = (1R,5S)-carveol + oxidized [NADPH--hemoprotein reductase] + H2O + H(+). It carries out the reaction (4S)-limonene + reduced [NADPH--hemoprotein reductase] + O2 = (1S,5R)-carveol + oxidized [NADPH--hemoprotein reductase] + H2O + H(+). The enzyme catalyses gamma-terpinene + 2 reduced [NADPH--hemoprotein reductase] + 2 O2 = carvacrol + 2 oxidized [NADPH--hemoprotein reductase] + 3 H2O + 2 H(+). The protein operates within secondary metabolite biosynthesis; terpenoid biosynthesis. Functionally, involved in the biosynthesis of phenolic monoterpenes natural products thymol and carvacrol which have a broad range of biological activities acting as antimicrobial compounds, insecticides, antioxidants and pharmaceutical agents. Catalyzes the C2-hydroxylation of gamma-terpinene to produce carvacrol. Mediates also the C6-hydroxylation of (4S)-limonene and (4R)-limonene to form carveol. This chain is Cytochrome P450 71D180, found in Thymus vulgaris (Thyme).